We begin with the raw amino-acid sequence, 541 residues long: Chaperonin GroEL (541 aa).

ATP-binding positions include T29–P32, D86–T90, G413, N476–A478, and D492. The tract at residues K521–M541 is disordered. Positions P526–P535 are enriched in low complexity.

It belongs to the chaperonin (HSP60) family. In terms of assembly, forms a cylinder of 14 subunits composed of two heptameric rings stacked back-to-back. Interacts with the co-chaperonin GroES.

The protein localises to the cytoplasm. It carries out the reaction ATP + H2O + a folded polypeptide = ADP + phosphate + an unfolded polypeptide.. In terms of biological role, together with its co-chaperonin GroES, plays an essential role in assisting protein folding. The GroEL-GroES system forms a nano-cage that allows encapsulation of the non-native substrate proteins and provides a physical environment optimized to promote and accelerate protein folding. In Levilactobacillus brevis (strain ATCC 367 / BCRC 12310 / CIP 105137 / JCM 1170 / LMG 11437 / NCIMB 947 / NCTC 947) (Lactobacillus brevis), this protein is Chaperonin GroEL.